Here is a 934-residue protein sequence, read N- to C-terminus: Serine/threonine-protein kinase atg1 (934 aa).

A Protein kinase domain is found at 22–328 (YTRLDEIGRG…SDFFDCDTIT (307 aa)). ATP-binding positions include 28 to 36 (IGRGSFATV) and Lys51. Asp165 functions as the Proton acceptor in the catalytic mechanism. Disordered regions lie at residues 335 to 432 (IADD…PRRP), 462 to 481 (RNTYAGVPQTEKQAEKTKEE), 531 to 580 (RRPG…YGQS), 684 to 703 (TDPSGRANVPGGERDSTDLT), 800 to 822 (RLPPDHPSHPSNHSVGPSVGSGA), and 878 to 900 (EEEEVSRSEPGSGTDRGDARRDG). Over residues 340-368 (PSTSRRSSVAVNTSGSTSRPQSRTGSRTP) the composition is skewed to polar residues. Positions 371–386 (MKREKDASYPGKKDDQ) are enriched in basic and acidic residues. Residues 538–550 (SSTATATSPLATT) show a composition bias toward low complexity. Positions 561 to 577 (ARADSTHTRQGSYERRY) are enriched in basic and acidic residues.

Belongs to the protein kinase superfamily. Ser/Thr protein kinase family. APG1/unc-51/ULK1 subfamily. In terms of assembly, homodimer. Forms a ternary complex with ATG13 and ATG17.

Its subcellular location is the cytoplasm. The protein resides in the preautophagosomal structure membrane. It carries out the reaction L-seryl-[protein] + ATP = O-phospho-L-seryl-[protein] + ADP + H(+). The catalysed reaction is L-threonyl-[protein] + ATP = O-phospho-L-threonyl-[protein] + ADP + H(+). In terms of biological role, serine/threonine protein kinase involved in the cytoplasm to vacuole transport (Cvt) and found to be essential in autophagy, where it is required for the formation of autophagosomes. Involved in the clearance of protein aggregates which cannot be efficiently cleared by the proteasome. Required for selective autophagic degradation of the nucleus (nucleophagy) as well as for mitophagy which contributes to regulate mitochondrial quantity and quality by eliminating the mitochondria to a basal level to fulfill cellular energy requirements and preventing excess ROS production. Also involved in endoplasmic reticulum-specific autophagic process, in selective removal of ER-associated degradation (ERAD) substrates. Plays a key role in ATG9 and ATG23 cycling through the pre-autophagosomal structure and is necessary to promote ATG18 binding to ATG9 through phosphorylation of ATG9. Catalyzes phosphorylation of ATG4, decreasing the interaction between ATG4 and ATG8 and impairing deconjugation of PE-conjugated forms of ATG8. Required for conidiation and development of aerial hyphae. In Aspergillus oryzae (strain ATCC 42149 / RIB 40) (Yellow koji mold), this protein is Serine/threonine-protein kinase atg1.